We begin with the raw amino-acid sequence, 217 residues long: UPF0502 protein ASA_1460 (217 aa).

The protein belongs to the UPF0502 family.

In Aeromonas salmonicida (strain A449), this protein is UPF0502 protein ASA_1460.